The sequence spans 361 residues: Lactate-binding periplasmic protein TTHA0766 (361 aa).

Positions 1–22 (MKRVSRRAFLRRLGVGVAATAA) form a signal peptide, tat-type signal. Substrate-binding residues include Y101, N158, and R178. N158 lines the Ca(2+) pocket. 3 residues coordinate Ca(2+): D216, F217, and Q247. Residues F217 and 247 to 250 (QPVD) each bind substrate.

Belongs to the bacterial solute-binding protein 7 family. Homodimer. The complex comprises the extracytoplasmic solute receptor protein TTHA0766, and the two putative transmembrane proteins TTHA0767 and TTHA0768.

It localises to the periplasm. Part of the tripartite ATP-independent periplasmic (TRAP) transport system involved in the uptake of lactate. This protein specifically binds L-lactate. This is Lactate-binding periplasmic protein TTHA0766 from Thermus thermophilus (strain ATCC 27634 / DSM 579 / HB8).